Consider the following 580-residue polypeptide: DNA mismatch repair protein MutL (580 aa).

This sequence belongs to the DNA mismatch repair MutL/HexB family.

This protein is involved in the repair of mismatches in DNA. It is required for dam-dependent methyl-directed DNA mismatch repair. May act as a 'molecular matchmaker', a protein that promotes the formation of a stable complex between two or more DNA-binding proteins in an ATP-dependent manner without itself being part of a final effector complex. This is DNA mismatch repair protein MutL from Chlamydia felis (strain Fe/C-56) (Chlamydophila felis).